A 411-amino-acid polypeptide reads, in one-letter code: Putative odorant receptor 59c (411 aa).

The Cytoplasmic segment spans residues 1 to 46 (MTKFFFKRLQTAPLDQEVSSLDASDYYYRIAFFLGWTPPKGALLRW). The helical transmembrane segment at 47 to 67 (IYSLWTLTTMWLGIVYLPLGL) threads the bilayer. The Extracellular portion of the chain corresponds to 68-86 (SLTYVKHFDRFTPTEFLTS). A helical transmembrane segment spans residues 87-107 (LQVDINCIGNVIKSCVTYSQM). Residues 108 to 139 (WRFRRMNELISSLDKRCVTTTQRRIFHKMVAR) lie on the Cytoplasmic side of the membrane. Residues 140-160 (VNLIVILFLSTYLGFCFLTLF) traverse the membrane as a helical segment. Over 161–185 (TSVFAGKAPWQLYNPLVDWRKGHWQ) the chain is Extracellular. Residues 186–206 (LWIASILEYCVVSIGTMQELM) form a helical membrane-spanning segment. The Cytoplasmic portion of the chain corresponds to 207-271 (SDTYAIVFIS…QIIRPILSIT (65 aa)). Residues 272–292 (IFAQFMLVGIDLGLAAISILF) form a helical membrane-spanning segment. The Extracellular portion of the chain corresponds to 293 to 296 (FPNT). Residues 297–317 (IWTIMANVSFIVAICTESFPC) form a helical membrane-spanning segment. Residues 318 to 369 (CMLCEHLIEDSVHVSNALFHSNWITADRSYKSAVLYFLHRAQQPIQFTAGSI) are Cytoplasmic-facing. Residues 370 to 390 (FPISVQSNIAVAKFAFTIITI) form a helical membrane-spanning segment. The Extracellular segment spans residues 391–411 (VNQMNLGEKFFSDRSNGDINP).

This sequence belongs to the insect chemoreceptor superfamily. Heteromeric odorant receptor channel (TC 1.A.69) family. Or2a subfamily. Interacts with Orco. Complexes exist early in the endomembrane system in olfactory sensory neurons (OSNs), coupling these complexes to the conserved ciliary trafficking pathway. As to expression, expressed in olfactory sensory neurons in the maxillary palp.

The protein localises to the cell membrane. Functionally, odorant receptor which mediates acceptance or avoidance behavior, depending on its substrates. The odorant receptor repertoire encodes a large collection of odor stimuli that vary widely in identity, intensity, and duration. May form a complex with Orco to form odorant-sensing units, providing sensitive and prolonged odorant signaling and calcium permeability. The polypeptide is Putative odorant receptor 59c (Or59c) (Drosophila melanogaster (Fruit fly)).